A 421-amino-acid polypeptide reads, in one-letter code: UDP-N-acetylglucosamine 1-carboxyvinyltransferase 1 (421 aa).

Position 22-23 (22-23 (KN)) interacts with phosphoenolpyruvate. Arg95 is a binding site for UDP-N-acetyl-alpha-D-glucosamine. Cys119 acts as the Proton donor in catalysis. Cys119 carries the post-translational modification 2-(S-cysteinyl)pyruvic acid O-phosphothioketal. Residues 124 to 128 (RPIEQ), Asp308, and Val330 each bind UDP-N-acetyl-alpha-D-glucosamine.

This sequence belongs to the EPSP synthase family. MurA subfamily.

It is found in the cytoplasm. It catalyses the reaction phosphoenolpyruvate + UDP-N-acetyl-alpha-D-glucosamine = UDP-N-acetyl-3-O-(1-carboxyvinyl)-alpha-D-glucosamine + phosphate. Its pathway is cell wall biogenesis; peptidoglycan biosynthesis. In terms of biological role, cell wall formation. Adds enolpyruvyl to UDP-N-acetylglucosamine. The protein is UDP-N-acetylglucosamine 1-carboxyvinyltransferase 1 of Staphylococcus epidermidis (strain ATCC 35984 / DSM 28319 / BCRC 17069 / CCUG 31568 / BM 3577 / RP62A).